The following is a 227-amino-acid chain: Ribonuclease 3 (227 aa).

Residues 5–127 (LNALQLRLQH…LIGAVYLDAG (123 aa)) form the RNase III domain. Glu-40 contacts Mg(2+). Asp-44 is a catalytic residue. The Mg(2+) site is built by Asp-113 and Glu-116. Residue Glu-116 is part of the active site. The region spanning 154–224 (DAKTALQEWL…ATAMLELLKA (71 aa)) is the DRBM domain.

It belongs to the ribonuclease III family. In terms of assembly, homodimer. It depends on Mg(2+) as a cofactor.

It localises to the cytoplasm. The enzyme catalyses Endonucleolytic cleavage to 5'-phosphomonoester.. Digests double-stranded RNA. Involved in the processing of primary rRNA transcript to yield the immediate precursors to the large and small rRNAs (23S and 16S). Processes some mRNAs, and tRNAs when they are encoded in the rRNA operon. Processes pre-crRNA and tracrRNA of type II CRISPR loci if present in the organism. The sequence is that of Ribonuclease 3 from Delftia acidovorans (strain DSM 14801 / SPH-1).